The following is a 213-amino-acid chain: ATP-dependent Clp protease proteolytic subunit 1 (213 aa).

Ser-114 (nucleophile) is an active-site residue. His-139 is a catalytic residue.

This sequence belongs to the peptidase S14 family. In terms of assembly, fourteen ClpP subunits assemble into 2 heptameric rings which stack back to back to give a disk-like structure with a central cavity, resembling the structure of eukaryotic proteasomes.

It localises to the cytoplasm. It carries out the reaction Hydrolysis of proteins to small peptides in the presence of ATP and magnesium. alpha-casein is the usual test substrate. In the absence of ATP, only oligopeptides shorter than five residues are hydrolyzed (such as succinyl-Leu-Tyr-|-NHMec, and Leu-Tyr-Leu-|-Tyr-Trp, in which cleavage of the -Tyr-|-Leu- and -Tyr-|-Trp bonds also occurs).. Its function is as follows. Cleaves peptides in various proteins in a process that requires ATP hydrolysis. Has a chymotrypsin-like activity. Plays a major role in the degradation of misfolded proteins. This Pseudomonas aeruginosa (strain ATCC 15692 / DSM 22644 / CIP 104116 / JCM 14847 / LMG 12228 / 1C / PRS 101 / PAO1) protein is ATP-dependent Clp protease proteolytic subunit 1.